A 426-amino-acid polypeptide reads, in one-letter code: Serine/threonine-protein kinase ssn3 (426 aa).

Positions 41–368 (YHIVGFISSG…AREALEHPYF (328 aa)) constitute a Protein kinase domain. Residues 47–55 (ISSGTYGRV) and Lys-71 each bind ATP. The Proton acceptor role is filled by Asp-173. Residues 390-426 (RVTQDDNDIRSGSLPGTKRSGLPDDSLMGRAAKRLKE) form a disordered region.

Belongs to the protein kinase superfamily. CMGC Ser/Thr protein kinase family. CDC2/CDKX subfamily. Component of the srb8-11 complex, a regulatory module of the Mediator complex. Mg(2+) is required as a cofactor.

The protein resides in the nucleus. It carries out the reaction L-seryl-[protein] + ATP = O-phospho-L-seryl-[protein] + ADP + H(+). The catalysed reaction is L-threonyl-[protein] + ATP = O-phospho-L-threonyl-[protein] + ADP + H(+). The enzyme catalyses [DNA-directed RNA polymerase] + ATP = phospho-[DNA-directed RNA polymerase] + ADP + H(+). Functionally, component of the srb8-11 complex. The srb8-11 complex is a regulatory module of the Mediator complex which is itself involved in regulation of basal and activated RNA polymerase II-dependent transcription. The srb8-11 complex may be involved in the transcriptional repression of a subset of genes regulated by Mediator. It may inhibit the association of the Mediator complex with RNA polymerase II to form the holoenzyme complex. The srb8-11 complex phosphorylates the C-terminal domain (CTD) of the largest subunit of RNA polymerase II. In Aspergillus fumigatus (strain ATCC MYA-4609 / CBS 101355 / FGSC A1100 / Af293) (Neosartorya fumigata), this protein is Serine/threonine-protein kinase ssn3 (ssn3).